The following is a 573-amino-acid chain: Glucocorticoid modulatory element-binding protein 1 (573 aa).

Position 2 is an N-acetylalanine (A2). Residues 82–166 (TGTIEANEDM…RKMMDSGQID (85 aa)) enclose the SAND domain. C113 contributes to the Zn(2+) binding site. Residues K139, K143, K146, and R157 each coordinate DNA. 3 residues coordinate Zn(2+): H170, C174, and C178. A coiled-coil region spans residues 321 to 367 (LDNRRNQVEQGEEQFLYTLTDLERQLEEQKKQGQDHRLKSQTVQNVV). A disordered region spans residues 370–398 (PVSTPKPPKRPRLQRPASTTVLSPSPPVQ).

Homodimer, and heterodimer of GMEB1 and GMEB2. GMEB1 and GMEB2 form the parvovirus initiator complex (PIF). Interacts with the glucocorticoid receptor (NR3C1) and NCOA2/TIF2. May interact with HSP27 and CREB-binding protein (CBP).

The protein localises to the nucleus. The protein resides in the cytoplasm. Its function is as follows. Trans-acting factor that binds to glucocorticoid modulatory elements (GME) present in the TAT (tyrosine aminotransferase) promoter and increases sensitivity to low concentrations of glucocorticoids. Also binds to the transferrin receptor promoter. Essential auxiliary factor for the replication of parvoviruses. In Homo sapiens (Human), this protein is Glucocorticoid modulatory element-binding protein 1 (GMEB1).